We begin with the raw amino-acid sequence, 306 residues long: Tyrosine recombinase XerC (306 aa).

One can recognise a Core-binding (CB) domain in the interval Met1–Tyr90. The Tyr recombinase domain maps to Arg111–Arg298. Catalysis depends on residues Arg151, Lys175, His250, Arg253, and His276. Tyr285 functions as the O-(3'-phospho-DNA)-tyrosine intermediate in the catalytic mechanism.

This sequence belongs to the 'phage' integrase family. XerC subfamily. As to quaternary structure, forms a cyclic heterotetrameric complex composed of two molecules of XerC and two molecules of XerD.

Its subcellular location is the cytoplasm. Its function is as follows. Site-specific tyrosine recombinase, which acts by catalyzing the cutting and rejoining of the recombining DNA molecules. The XerC-XerD complex is essential to convert dimers of the bacterial chromosome into monomers to permit their segregation at cell division. It also contributes to the segregational stability of plasmids. This Pelotomaculum thermopropionicum (strain DSM 13744 / JCM 10971 / SI) protein is Tyrosine recombinase XerC.